A 299-amino-acid polypeptide reads, in one-letter code: MLSFQDMILTLQRFWIKHGCALMQPYDMEVGAGTFHESTFLRAIGPEPWRAIFVQASRRPSDGRYGENPNRLQRYYQMQVVIKPSAPDLQALYLQSLYAIGIDPATQDIRFVEDNWESPTLGAWGLGWEVWLNGMEISQFTYFQQVGGIECKPVTGELTYGLERIAMYLQNVNSVYDLIWTTTPDGVLTYGDVHQQNEREQSFYNFEYADIADLCAQFDAAEKMSLLLAQKKFPLPAYEQALKASHLFNLLDARRAISVTERQRYILRVRALSKAAAEAWYETRAALDFPLCRQQGIEK.

It belongs to the class-II aminoacyl-tRNA synthetase family. In terms of assembly, tetramer of two alpha and two beta subunits.

Its subcellular location is the cytoplasm. The catalysed reaction is tRNA(Gly) + glycine + ATP = glycyl-tRNA(Gly) + AMP + diphosphate. The sequence is that of Glycine--tRNA ligase alpha subunit from Dichelobacter nodosus (strain VCS1703A).